Reading from the N-terminus, the 408-residue chain is Multidrug resistance protein MdtG (408 aa).

The next 10 helical transmembrane spans lie at 13-33 (LYIA…VMPF), 51-71 (LWSG…SPFW), 89-109 (LGMA…QFLL), 112-132 (AALG…AIQV), 138-158 (GWAL…GPLL), 170-190 (PVFF…FFFI), 221-241 (LFVT…ILTL), 253-273 (LAFI…LSAP), 287-307 (ILVA…FVQS), and 375-395 (AVFL…WLSL).

It belongs to the major facilitator superfamily. DHA1 family. MdtG (TC 2.A.1.2.20) subfamily.

The protein resides in the cell inner membrane. The chain is Multidrug resistance protein MdtG from Dickeya zeae (strain Ech586) (Dickeya dadantii (strain Ech586)).